The following is a 583-amino-acid chain: 2-succinyl-5-enolpyruvyl-6-hydroxy-3-cyclohexene-1-carboxylate synthase (583 aa).

The protein belongs to the TPP enzyme family. MenD subfamily. As to quaternary structure, homodimer. Requires Mg(2+) as cofactor. Mn(2+) is required as a cofactor. Thiamine diphosphate serves as cofactor.

It catalyses the reaction isochorismate + 2-oxoglutarate + H(+) = 5-enolpyruvoyl-6-hydroxy-2-succinyl-cyclohex-3-ene-1-carboxylate + CO2. It functions in the pathway quinol/quinone metabolism; 1,4-dihydroxy-2-naphthoate biosynthesis; 1,4-dihydroxy-2-naphthoate from chorismate: step 2/7. Its pathway is cofactor biosynthesis; phylloquinone biosynthesis. Catalyzes the thiamine diphosphate-dependent decarboxylation of 2-oxoglutarate and the subsequent addition of the resulting succinic semialdehyde-thiamine pyrophosphate anion to isochorismate to yield 2-succinyl-5-enolpyruvyl-6-hydroxy-3-cyclohexene-1-carboxylate (SEPHCHC). In Nostoc sp. (strain PCC 7120 / SAG 25.82 / UTEX 2576), this protein is 2-succinyl-5-enolpyruvyl-6-hydroxy-3-cyclohexene-1-carboxylate synthase.